The chain runs to 499 residues: Rhamnogalacturonan I rhamnosyltransferase 1 (499 aa).

The helical; Signal-anchor for type II membrane protein transmembrane segment at 31 to 50 (WFVRVCSSILVWTCLVQLFA) threads the bilayer. N-linked (GlcNAc...) asparagine glycosylation is found at N88, N121, and N207. 261–263 (HLR) serves as a coordination point for substrate. N375, N435, and N496 each carry an N-linked (GlcNAc...) asparagine glycan.

This sequence belongs to the glycosyltransferase GT106 family.

It localises to the golgi apparatus membrane. The catalysed reaction is alpha-D-galacturonosyl-[(1-&gt;2)-alpha-L-rhamnosyl-(1-&gt;4)-alpha-D-galacturonosyl](n) + UDP-beta-L-rhamnose = [(1-&gt;2)-alpha-L-rhamnosyl-(1-&gt;4)-alpha-D-galacturonosyl](n+1) + UDP + H(+). It participates in glycan metabolism; pectin biosynthesis. Its function is as follows. Glycosyltransferase involved in the formation of rhamnogalacturonan I (RG-I) oligosaccharides in the seed coat mucilage, which is a specialized cell wall with abundant RG-I. Transfers the rhamnose residue from UDP-beta-L-rhamnose to RG-I oligosaccharides. This Arabidopsis thaliana (Mouse-ear cress) protein is Rhamnogalacturonan I rhamnosyltransferase 1.